Consider the following 546-residue polypeptide: Chaperonin GroEL (546 aa).

ATP-binding positions include 30–33, lysine 51, 87–91, glycine 415, and aspartate 495; these read TLGP and DGTTT.

This sequence belongs to the chaperonin (HSP60) family. In terms of assembly, forms a cylinder of 14 subunits composed of two heptameric rings stacked back-to-back. Interacts with the co-chaperonin GroES.

The protein localises to the cytoplasm. The enzyme catalyses ATP + H2O + a folded polypeptide = ADP + phosphate + an unfolded polypeptide.. In terms of biological role, together with its co-chaperonin GroES, plays an essential role in assisting protein folding. The GroEL-GroES system forms a nano-cage that allows encapsulation of the non-native substrate proteins and provides a physical environment optimized to promote and accelerate protein folding. This is Chaperonin GroEL from Alteromonas mediterranea (strain DSM 17117 / CIP 110805 / LMG 28347 / Deep ecotype).